The chain runs to 557 residues: Chaperonin GroEL 1 (557 aa).

Residues 29-32, Lys-50, 86-90, Gly-416, and Asp-495 contribute to the ATP site; these read TLGP and DGTTT.

Belongs to the chaperonin (HSP60) family. Forms a cylinder of 14 subunits composed of two heptameric rings stacked back-to-back. Interacts with the co-chaperonin GroES.

The protein resides in the cytoplasm. The catalysed reaction is ATP + H2O + a folded polypeptide = ADP + phosphate + an unfolded polypeptide.. Together with its co-chaperonin GroES, plays an essential role in assisting protein folding. The GroEL-GroES system forms a nano-cage that allows encapsulation of the non-native substrate proteins and provides a physical environment optimized to promote and accelerate protein folding. This is Chaperonin GroEL 1 from Protochlamydia amoebophila (strain UWE25).